Consider the following 161-residue polypeptide: Small ribosomal subunit protein uS9 (161 aa).

Belongs to the universal ribosomal protein uS9 family.

The sequence is that of Small ribosomal subunit protein uS9 from Bartonella henselae (strain ATCC 49882 / DSM 28221 / CCUG 30454 / Houston 1) (Rochalimaea henselae).